Reading from the N-terminus, the 107-residue chain is MMKVLVVFALLVTLISYSSSEGIDDLEADELLSLMANEQTRKECIPKHHECTSNKHGCCRGNFFKYKCQCTTVVTQDGEQTERCFCGTPPHHKAAELVVGFGKKIFG.

The N-terminal stretch at 1–20 (MMKVLVVFALLVTLISYSSS) is a signal peptide. Positions 21–41 (EGIDDLEADELLSLMANEQTR) are excised as a propeptide. 4 disulfide bridges follow: Cys-44-Cys-59, Cys-51-Cys-68, Cys-58-Cys-86, and Cys-70-Cys-84.

Belongs to the neurotoxin 19 (CSTX) family. 04 (U1-Lctx) subfamily. Expressed by the venom gland.

Its subcellular location is the secreted. This is U1-lycotoxin-Ls1b from Lycosa singoriensis (Wolf spider).